A 130-amino-acid polypeptide reads, in one-letter code: Small ribosomal subunit protein uS8 (130 aa).

It belongs to the universal ribosomal protein uS8 family. Part of the 30S ribosomal subunit. Contacts proteins S5 and S12.

Functionally, one of the primary rRNA binding proteins, it binds directly to 16S rRNA central domain where it helps coordinate assembly of the platform of the 30S subunit. This chain is Small ribosomal subunit protein uS8, found in Ruegeria sp. (strain TM1040) (Silicibacter sp.).